We begin with the raw amino-acid sequence, 353 residues long: 3-deoxy-D-manno-octulosonic acid transferase (353 aa).

Glu31 acts as the Proton acceptor in catalysis. CMP contacts are provided by residues 211–212, 247–249, and 273–276; these read PR, FGI, and NLLE.

This sequence belongs to the glycosyltransferase group 1 family. Glycosyltransferase 30 subfamily. Can form homodimer, homotrimer and homotetramer.

It localises to the cell inner membrane. It catalyses the reaction lipid IVA (E. coli) + CMP-3-deoxy-beta-D-manno-octulosonate = alpha-Kdo-(2-&gt;6)-lipid IVA (E. coli) + CMP + H(+). It functions in the pathway bacterial outer membrane biogenesis; LPS core biosynthesis. Its function is as follows. Involved in lipopolysaccharide (LPS) biosynthesis. Catalyzes the transfer of a single 3-deoxy-D-manno-octulosonate (Kdo) residue from CMP-Kdo to lipid IV(A), the tetraacyldisaccharide-1,4'-bisphosphate precursor of lipid A. Is strictly monofunctional, i.e. is capable of adding only a single Kdo residue to the acceptor lipid. The polypeptide is 3-deoxy-D-manno-octulosonic acid transferase (kdtA) (Aquifex aeolicus (strain VF5)).